The sequence spans 155 residues: Small ribosomal subunit protein uS8m (155 aa).

This sequence belongs to the universal ribosomal protein uS8 family. In terms of assembly, component of the mitochondrial small ribosomal subunit (mt-SSU). Mature yeast 74S mitochondrial ribosomes consist of a small (37S) and a large (54S) subunit. The 37S small subunit contains a 15S ribosomal RNA (15S mt-rRNA) and 34 different proteins. The 54S large subunit contains a 21S rRNA (21S mt-rRNA) and 46 different proteins.

It is found in the mitochondrion. Component of the mitochondrial ribosome (mitoribosome), a dedicated translation machinery responsible for the synthesis of mitochondrial genome-encoded proteins, including at least some of the essential transmembrane subunits of the mitochondrial respiratory chain. The mitoribosomes are attached to the mitochondrial inner membrane and translation products are cotranslationally integrated into the membrane. This chain is Small ribosomal subunit protein uS8m (MRPS8), found in Saccharomyces cerevisiae (strain ATCC 204508 / S288c) (Baker's yeast).